A 117-amino-acid polypeptide reads, in one-letter code: Type II secretion system protein I (117 aa).

The propeptide at Met1–Gly6 is leader sequence. Phe7 bears the N-methylphenylalanine mark. Residues Phe7–Ile27 traverse the membrane as a helical segment.

Belongs to the GSP I family. In terms of assembly, type II secretion is composed of four main components: the outer membrane complex, the inner membrane complex, the cytoplasmic secretion ATPase and the periplasm-spanning pseudopilus. Interacts with core component EpsG. In terms of processing, cleaved by prepilin peptidase. Post-translationally, methylated by prepilin peptidase at the amino group of the N-terminal phenylalanine once the leader sequence is cleaved by prepilin peptidase.

It is found in the cell inner membrane. Component of the type II secretion system required for the energy-dependent secretion of extracellular factors such as proteases and toxins from the periplasm. Part of the pseudopilus tip complex that is critical for the recognition and binding of secretion substrates. This is Type II secretion system protein I (epsI) from Vibrio cholerae serotype O1 (strain ATCC 39315 / El Tor Inaba N16961).